Reading from the N-terminus, the 126-residue chain is Class I hydrophobin 1 (126 aa).

A signal peptide spans 1 to 16; that stretch reads MQYMTIVAFLAATVAA. 4 disulfides stabilise this stretch: cysteine 38–cysteine 100, cysteine 46–cysteine 94, cysteine 47–cysteine 75, and cysteine 101–cysteine 119.

Belongs to the fungal hydrophobin family.

The protein localises to the secreted. The protein resides in the cell wall. Its function is as follows. Aerial growth, conidiation, and dispersal of filamentous fungi in the environment rely upon a capability of their secreting small amphipathic proteins called hydrophobins (HPBs) with low sequence identity. Class I can self-assemble into an outermost layer of rodlet bundles on aerial cell surfaces, conferring cellular hydrophobicity that supports fungal growth, development and dispersal; whereas Class II form highly ordered films at water-air interfaces through intermolecular interactions but contribute nothing to the rodlet structure. HYD1 and HYD2 are required for the structural integrity of the long aerial chains of microconidia. Does not seem to be important for the ability to cause seedling disease. In Gibberella moniliformis (Maize ear and stalk rot fungus), this protein is Class I hydrophobin 1.